We begin with the raw amino-acid sequence, 322 residues long: Undecaprenyl-phosphate 4-deoxy-4-formamido-L-arabinose transferase (322 aa).

At 1-235 the chain is on the cytoplasmic side; the sequence is MFEIHPVKKV…TCLTTTPLRM (235 aa). A helical transmembrane segment spans residues 236-256; that stretch reads LSLLGSIIAIGGFSIAVLLVI. Residues 257–269 lie on the Periplasmic side of the membrane; that stretch reads LRLTFGPQWAAEG. A helical transmembrane segment spans residues 270 to 290; sequence VFMLFAVLFTFIGAQFIGMGL. The Cytoplasmic portion of the chain corresponds to 291–322; that stretch reads LGEYIGRIYTDVRARPRYFVQQVIRPSSKENE.

The protein belongs to the glycosyltransferase 2 family.

The protein resides in the cell inner membrane. The enzyme catalyses UDP-4-deoxy-4-formamido-beta-L-arabinose + di-trans,octa-cis-undecaprenyl phosphate = 4-deoxy-4-formamido-alpha-L-arabinopyranosyl di-trans,octa-cis-undecaprenyl phosphate + UDP. The protein operates within glycolipid biosynthesis; 4-amino-4-deoxy-alpha-L-arabinose undecaprenyl phosphate biosynthesis; 4-amino-4-deoxy-alpha-L-arabinose undecaprenyl phosphate from UDP-4-deoxy-4-formamido-beta-L-arabinose and undecaprenyl phosphate: step 1/2. Its pathway is bacterial outer membrane biogenesis; lipopolysaccharide biosynthesis. In terms of biological role, catalyzes the transfer of 4-deoxy-4-formamido-L-arabinose from UDP to undecaprenyl phosphate. The modified arabinose is attached to lipid A and is required for resistance to polymyxin and cationic antimicrobial peptides. The sequence is that of Undecaprenyl-phosphate 4-deoxy-4-formamido-L-arabinose transferase from Shigella flexneri serotype 5b (strain 8401).